A 190-amino-acid chain; its full sequence is MGIMGTFLLLAAEANAVHSELAEGAAEGGFGLNLDIFETNLINLAILVGILFYFGRKVLSNILNERQSNIATAIQEAEGRLKEAKTALSQAQEQLKQSQAEAERIRQSAVENAQKAKEALLAKAVQDVERLKQTAAADLNTETERAIAQLRQRVATLALQKVESQLKGGIADDAQQSLIDRSIAQLGGNV.

A helical membrane pass occupies residues 34–54 (LDIFETNLINLAILVGILFYF).

This sequence belongs to the ATPase B chain family. In terms of assembly, F-type ATPases have 2 components, F(1) - the catalytic core - and F(0) - the membrane proton channel. F(1) has five subunits: alpha(3), beta(3), gamma(1), delta(1), epsilon(1). F(0) has four main subunits: a(1), b(1), b'(1) and c(10-14). The alpha and beta chains form an alternating ring which encloses part of the gamma chain. F(1) is attached to F(0) by a central stalk formed by the gamma and epsilon chains, while a peripheral stalk is formed by the delta, b and b' chains.

It localises to the cellular thylakoid membrane. Functionally, f(1)F(0) ATP synthase produces ATP from ADP in the presence of a proton or sodium gradient. F-type ATPases consist of two structural domains, F(1) containing the extramembraneous catalytic core and F(0) containing the membrane proton channel, linked together by a central stalk and a peripheral stalk. During catalysis, ATP synthesis in the catalytic domain of F(1) is coupled via a rotary mechanism of the central stalk subunits to proton translocation. Component of the F(0) channel, it forms part of the peripheral stalk, linking F(1) to F(0). The protein is ATP synthase subunit b of Nostoc punctiforme (strain ATCC 29133 / PCC 73102).